A 106-amino-acid polypeptide reads, in one-letter code: Urease subunit beta (106 aa).

Belongs to the urease beta subunit family. Heterotrimer of UreA (gamma), UreB (beta) and UreC (alpha) subunits. Three heterotrimers associate to form the active enzyme.

It localises to the cytoplasm. The catalysed reaction is urea + 2 H2O + H(+) = hydrogencarbonate + 2 NH4(+). The protein operates within nitrogen metabolism; urea degradation; CO(2) and NH(3) from urea (urease route): step 1/1. The polypeptide is Urease subunit beta (Escherichia coli O157:H7).